The primary structure comprises 331 residues: MALLCYNRGCGQRFDPEANADDACTYHPGVPVFHDALKGWSCCKRRTTDFSDFLSIVGCTKGRHNSEKPPEPVKPEVKTTEKKELSELKPKFQEHIIQAPKPVEAIKRPSPDEPMTNLELKISASLKQALDKLKLSSGNEEDKKEEDSDEIKIGTSCKNGGCSKTYQGLQSLEEVCVYHSGVPIFHEGMKYWSCCRRKTSDFNTFLAQEGCTRGKHVWTKKDAGKKVVPCRHDWHQTGGEVTISVYAKNSLPELSQVEANSTLLNVHIVFEGEKEFHQNVKLWGVIDVKRSYVTMTATKIEITMRKAEPMQWASLELPTTKKQEKQKDIAD.

An N-acetylalanine modification is found at Ala-2. The segment at 2 to 77 is interaction with PPP5C; that stretch reads ALLCYNRGCG…KPPEPVKPEV (76 aa). Zn(2+) contacts are provided by Cys-5, Cys-10, Cys-24, His-27, Cys-42, and Cys-43. CHORD domains are found at residues 5-64 and 157-216; these read CYNR…KGRH and CKNG…RGKH. Phosphothreonine is present on Thr-47. Phosphoserine is present on Ser-51. 10 residues coordinate Zn(2+): Cys-59, His-64, Cys-157, Cys-162, Cys-176, His-179, Cys-194, Cys-195, Cys-211, and His-216. The tract at residues 62–82 is disordered; that stretch reads GRHNSEKPPEPVKPEVKTTEK. The segment covering 64–82 has biased composition (basic and acidic residues); sequence HNSEKPPEPVKPEVKTTEK. The segment at 65-316 is interaction with HSP90AA1 and HSP90AB1; sequence NSEKPPEPVK…AEPMQWASLE (252 aa). The region spanning 227–316 is the CS domain; that stretch reads VVPCRHDWHQ…AEPMQWASLE (90 aa).

In terms of assembly, interacts with HSP90AA1, HSP90AB1, PPP5C, ROCK1 and ROCK2.

Functionally, regulates centrosome duplication, probably by inhibiting the kinase activity of ROCK2. Proposed to act as co-chaperone for HSP90. May play a role in the regulation of NOD1 via a HSP90 chaperone complex. In vitro, has intrinsic chaperone activity. This function may be achieved by inhibiting association of ROCK2 with NPM1. Plays a role in ensuring the localization of the tyrosine kinase receptor EGFR to the plasma membrane, and thus ensures the subsequent regulation of EGFR activity and EGF-induced actin cytoskeleton remodeling. Involved in stress response. Prevents tumorigenesis. The polypeptide is Cysteine and histidine-rich domain-containing protein 1 (Chordc1) (Rattus norvegicus (Rat)).